We begin with the raw amino-acid sequence, 289 residues long: Acetylglutamate kinase (289 aa).

Substrate-binding positions include 60 to 61, arginine 82, and asparagine 182; that span reads GG.

Belongs to the acetylglutamate kinase family. ArgB subfamily.

It localises to the cytoplasm. The catalysed reaction is N-acetyl-L-glutamate + ATP = N-acetyl-L-glutamyl 5-phosphate + ADP. The protein operates within amino-acid biosynthesis; L-arginine biosynthesis; N(2)-acetyl-L-ornithine from L-glutamate: step 2/4. Functionally, catalyzes the ATP-dependent phosphorylation of N-acetyl-L-glutamate. This chain is Acetylglutamate kinase, found in Methanothrix thermoacetophila (strain DSM 6194 / JCM 14653 / NBRC 101360 / PT) (Methanosaeta thermophila).